We begin with the raw amino-acid sequence, 325 residues long: MTQQMTLTAEISADLLGYRLDQALAQLFPDYSRSRIKVWIENDLVKVNGIIVNRARGKVFGGEQIEIQAEIEEEIRFEPQNIPLNIVHEDDDIIIINKPKNLVVHPGAGNPDGTVLNALLYYYPPIAEVPRAGIIHRLDKDTTGLMVVAKNIPAQTHLVTALQKRRITREYEAIASGIMTQGGKVDEPMARHPTKRTAMAVHPMGKPAITHYRIMERFRNYTRLRLRLETGRTHQIRVHMAHIAHPLLGDQLYGGRPRPPKGSSEAFLTVLRAFQRQALHATMLRLEHPINGELIECHAPLPADFVELIEALKTDYQRYKEDLYY.

The 61-residue stretch at Y18–E78 folds into the S4 RNA-binding domain. The active site involves D139.

The protein belongs to the pseudouridine synthase RluA family.

Its subcellular location is the cytoplasm. The enzyme catalyses uridine(1911/1915/1917) in 23S rRNA = pseudouridine(1911/1915/1917) in 23S rRNA. Responsible for synthesis of pseudouridine from uracil at positions 1911, 1915 and 1917 in 23S ribosomal RNA. This Haemophilus ducreyi (strain 35000HP / ATCC 700724) protein is Ribosomal large subunit pseudouridine synthase D (rluD).